Reading from the N-terminus, the 212-residue chain is Peptide methionine sulfoxide reductase MsrA (212 aa).

C52 is an active-site residue.

Belongs to the MsrA Met sulfoxide reductase family.

The enzyme catalyses L-methionyl-[protein] + [thioredoxin]-disulfide + H2O = L-methionyl-(S)-S-oxide-[protein] + [thioredoxin]-dithiol. It carries out the reaction [thioredoxin]-disulfide + L-methionine + H2O = L-methionine (S)-S-oxide + [thioredoxin]-dithiol. In terms of biological role, has an important function as a repair enzyme for proteins that have been inactivated by oxidation. Catalyzes the reversible oxidation-reduction of methionine sulfoxide in proteins to methionine. In Escherichia fergusonii (strain ATCC 35469 / DSM 13698 / CCUG 18766 / IAM 14443 / JCM 21226 / LMG 7866 / NBRC 102419 / NCTC 12128 / CDC 0568-73), this protein is Peptide methionine sulfoxide reductase MsrA.